The following is a 78-amino-acid chain: Protein SlyX homolog (78 aa).

Belongs to the SlyX family.

The sequence is that of Protein SlyX homolog from Photobacterium profundum (strain SS9).